The primary structure comprises 104 residues: Class I hydrophobin 4 (104 aa).

The first 16 residues, 1–16 (MFASTVFVSLLAVAAA), serve as a signal peptide directing secretion. 4 disulfides stabilise this stretch: C26–C85, C34–C79, C35–C61, and C86–C99.

Belongs to the fungal hydrophobin family. Self-assembles to form functional amyloid fibrils called rodlets. Self-assembly into fibrillar rodlets occurs spontaneously at hydrophobic:hydrophilic interfaces and the rodlets further associate laterally to form amphipathic monolayers.

The protein resides in the secreted. Its subcellular location is the cell wall. Its function is as follows. Aerial growth, conidiation, and dispersal of filamentous fungi in the environment rely upon a capability of their secreting small amphipathic proteins called hydrophobins (HPBs) with low sequence identity. Class I can self-assemble into an outermost layer of rodlet bundles on aerial cell surfaces, conferring cellular hydrophobicity that supports fungal growth, development and dispersal; whereas Class II form highly ordered films at water-air interfaces through intermolecular interactions but contribute nothing to the rodlet structure. HYD4 is a class I hydrophobin that negatively regulates aerial mycelial growth, conidiation, carotenoid and adenosine synthesis, resistance to oxidant stress, and fruiting body development. Seems not to be involved in the mycelial growth rate, the hydrophobicity of the mycelia and conidia, nor the conidial virulence on silkworm pupae. In Cordyceps militaris (Caterpillar fungus), this protein is Class I hydrophobin 4.